Reading from the N-terminus, the 179-residue chain is Large ribosomal subunit protein uL5 (179 aa).

It belongs to the universal ribosomal protein uL5 family. As to quaternary structure, part of the 50S ribosomal subunit; part of the 5S rRNA/L5/L18/L25 subcomplex. Contacts the 5S rRNA and the P site tRNA. Forms a bridge to the 30S subunit in the 70S ribosome.

This is one of the proteins that bind and probably mediate the attachment of the 5S RNA into the large ribosomal subunit, where it forms part of the central protuberance. In the 70S ribosome it contacts protein S13 of the 30S subunit (bridge B1b), connecting the 2 subunits; this bridge is implicated in subunit movement. Contacts the P site tRNA; the 5S rRNA and some of its associated proteins might help stabilize positioning of ribosome-bound tRNAs. The protein is Large ribosomal subunit protein uL5 of Francisella tularensis subsp. tularensis (strain SCHU S4 / Schu 4).